Consider the following 451-residue polypeptide: MNVVLKQRIPLKIKRMGINGEGIGFYKKTLIFVPGALKGEEVFCQISSVRRNFAEAKLLKINKKSKNRVDPACSIYKECGGCQIMHLQYDKQLEFKTDVIRQALMKFKPEGYENYEIRKTIGMSEPEHYRAKLQFQVRSFGGNVRAGLYAQGTHRLIDIKDCLVQDSLTQEMINRVAELLGKYKLPIYNERKIAGVRTVMIRRAQASGEVQLIFITSKRLDFDDVVIELVREFPELKTVAVNINASKTSDIYGQITEVIWGQESINEEVLDYGFSLSPRAFYQLNPKQTQILYSEAVKALDVKEDDDLIDAYCGVGTIGLAFAGKVKSVRGMDIIPEAIQDAKENALHMGFTNTHYEAGKAEDVIPRWYSEGFRANALIVDPPRTGLDDKLLNTILKMPPEKMVYVSCNTSTLARDLVTLTKVYHVHYIQSVDMFPHTARTEAVVKLQRKE.

Residues 2-60 (NVVLKQRIPLKIKRMGINGEGIGFYKKTLIFVPGALKGEEVFCQISSVRRNFAEAKLLK) form the TRAM domain. [4Fe-4S] cluster is bound by residues cysteine 73, cysteine 79, cysteine 82, and cysteine 162. Residues glutamine 283, tyrosine 312, aspartate 333, and aspartate 381 each coordinate S-adenosyl-L-methionine. The active-site Nucleophile is the cysteine 408.

The protein belongs to the class I-like SAM-binding methyltransferase superfamily. RNA M5U methyltransferase family.

This is an uncharacterized protein from Streptococcus agalactiae serotype III (strain NEM316).